Reading from the N-terminus, the 525-residue chain is MTENIHKHRILILDFGSQYTQLVARRVRELGVYCELWAWDVTEAQIRDFNPSGIILSGGPESTTEENSPRAPQYVFEAGVPVFGVCYGMQTMAMQLGGHVEASNEREFGYAQVEVVNDSALVRGIEDALTADGKPLLDVWMSHGDKVTAIPSDFVTVASTESCPFAIMANEEKRFYGVQFHPEVTHTRQGMRMLERFVRDICQCEALWTPAKIIDDAVARIREQVGDDKVILGLSGGVDSSVTAMLLHRAIGKNLTCVFVDNGLLRLNEAEQVLDMFGDHFGLNIVHVPAEARFLSALAGENDPEAKRKIIGRVFVEVFDEEALKLEDVKWLAQGTIYPDVIESAASATGKAHVIKSHHNVGGLPKEMKMGLVEPLKELFKDEVRKIGLELGLPYDMLYRHPFPGPGLGVRVLGEVKKEYCDLLRRADAIFIEELRKADLYDKVSQAFTVFLPVRSVGVMGDGRKYDWVVSLRAVETIDFMTAHWAHLPYDFLGRVSNRIINEVNGISRVVYDISGKPPATIEWE.

In terms of domain architecture, Glutamine amidotransferase type-1 spans 9–207 (RILILDFGSQ…VRDICQCEAL (199 aa)). The Nucleophile role is filled by cysteine 86. Catalysis depends on residues histidine 181 and glutamate 183. In terms of domain architecture, GMPS ATP-PPase spans 208–400 (WTPAKIIDDA…LGLPYDMLYR (193 aa)). 235-241 (SGGVDSS) contributes to the ATP binding site.

As to quaternary structure, homodimer.

The catalysed reaction is XMP + L-glutamine + ATP + H2O = GMP + L-glutamate + AMP + diphosphate + 2 H(+). The protein operates within purine metabolism; GMP biosynthesis; GMP from XMP (L-Gln route): step 1/1. In terms of biological role, catalyzes the synthesis of GMP from XMP. This is GMP synthase [glutamine-hydrolyzing] from Escherichia coli O17:K52:H18 (strain UMN026 / ExPEC).